Here is a 1782-residue protein sequence, read N- to C-terminus: Atrochrysone carboxylic acid synthase (1782 aa).

The tract at residues 41–270 (HTYTKDRRYP…ALPVYGGLCH (230 aa)) is N-terminal acylcarrier protein transacylase domain (SAT). One can recognise a Ketosynthase family 3 (KS3) domain in the interval 407 to 841 (QSKIAIVGMS…GGNSTLAIEE (435 aa)). Catalysis depends on for beta-ketoacyl synthase activity residues cysteine 580, histidine 716, and histidine 759. A malonyl-CoA:ACP transacylase (MAT) domain region spans residues 946 to 1266 (FAFTGQGSSY…LGILHCAGVP (321 aa)). Residues 1331–1648 (TSTVQQIIHE…RILLNRFFSA (318 aa)) are product template (PT) domain. The segment at 1335–1468 (QQIIHEQYDG…ATVYYEEASD (134 aa)) is N-terminal hotdog fold. In terms of domain architecture, PKS/mFAS DH spans 1335 to 1643 (QQIIHEQYDG…FRRYPRILLN (309 aa)). Histidine 1367 (proton acceptor; for dehydratase activity) is an active-site residue. Positions 1495 to 1643 (VANRFTRRMA…FRRYPRILLN (149 aa)) are C-terminal hotdog fold. Aspartate 1554 functions as the Proton donor; for dehydratase activity in the catalytic mechanism. Residues 1653-1703 (ARKSTPATSAPAPAPPAGSEALQPKAAPASTPAAPASADAPTTNGVKAAAE) are disordered. A compositionally biased stretch (low complexity) spans 1678 to 1695 (AAPASTPAAPASADAPTT). Residues 1704-1781 (PDANSTAAKA…DLKSWLLEYY (78 aa)) form the Carrier domain. Position 1741 is an O-(pantetheine 4'-phosphoryl)serine (serine 1741).

In terms of tissue distribution, specifically expressed in conidia.

The catalysed reaction is holo-[ACP] + 8 malonyl-CoA + 8 H(+) = atrochrysone carboxyl-[ACP] + 8 CO2 + 8 CoA + 2 H2O. It functions in the pathway secondary metabolite biosynthesis. Its function is as follows. Non-reducing polyketide synthase; part of the gene cluster that mediates the biosynthesis of trypacidin, a mycotoxin with antiprotozoal activity and that plays a role in the infection process. The pathway begins with the synthesis of atrochrysone thioester by the polyketide synthase (PKS) tpcC. The atrochrysone carboxyl ACP thioesterase tpcB then breaks the thioester bond and releases the atrochrysone carboxylic acid from tpcC. The decarboxylase tpcK converts atrochrysone carboxylic acid to atrochrysone which is further reduced into emodin anthrone. The next step is performed by the emodin anthrone oxygenase tpcL that catalyzes the oxidation of emodin anthrone to emodin. Emodin O-methyltransferase encoded by tpcA catalyzes methylation of the 8-hydroxy group of emodin to form questin. Ring cleavage of questin by questin oxidase tpcI leads to desmethylsulochrin via several intermediates including questin epoxide. Another methylation step catalyzed by tpcM leads to the formation of sulochrin which is further converted to monomethylsulfochrin by tpcH. Finally, the tpcJ catalyzes the conversion of monomethylsulfochrin to trypacidin. Trypacidin is toxic for human pulmonary and bronchial epithelial cells by initiating the intracellular formation of nitric oxide (NO) and hydrogen peroxide (H(2)O(2)), thus triggering host necrotic cell death. The trypacidin pathway is also able to produce endocrocin via a distinct route from the endocrocin Enc pathway. The polypeptide is Atrochrysone carboxylic acid synthase (Aspergillus fumigatus (strain ATCC MYA-4609 / CBS 101355 / FGSC A1100 / Af293) (Neosartorya fumigata)).